A 362-amino-acid polypeptide reads, in one-letter code: Dual-specificity RNA methyltransferase RlmN (362 aa).

E100 acts as the Proton acceptor in catalysis. Residues 106–345 (EPDRNTLCIS…VFIRNSRGED (240 aa)) form the Radical SAM core domain. A disulfide bond links C113 and C350. [4Fe-4S] cluster is bound by residues C120, C124, and C127. S-adenosyl-L-methionine-binding positions include 177–178 (GE), S209, 231–233 (SLH), and N307. The active-site S-methylcysteine intermediate is the C350.

This sequence belongs to the radical SAM superfamily. RlmN family. Requires [4Fe-4S] cluster as cofactor.

The protein resides in the cytoplasm. It carries out the reaction adenosine(2503) in 23S rRNA + 2 reduced [2Fe-2S]-[ferredoxin] + 2 S-adenosyl-L-methionine = 2-methyladenosine(2503) in 23S rRNA + 5'-deoxyadenosine + L-methionine + 2 oxidized [2Fe-2S]-[ferredoxin] + S-adenosyl-L-homocysteine. The enzyme catalyses adenosine(37) in tRNA + 2 reduced [2Fe-2S]-[ferredoxin] + 2 S-adenosyl-L-methionine = 2-methyladenosine(37) in tRNA + 5'-deoxyadenosine + L-methionine + 2 oxidized [2Fe-2S]-[ferredoxin] + S-adenosyl-L-homocysteine. In terms of biological role, specifically methylates position 2 of adenine 2503 in 23S rRNA and position 2 of adenine 37 in tRNAs. m2A2503 modification seems to play a crucial role in the proofreading step occurring at the peptidyl transferase center and thus would serve to optimize ribosomal fidelity. The polypeptide is Dual-specificity RNA methyltransferase RlmN (Desulfotalea psychrophila (strain LSv54 / DSM 12343)).